Here is a 384-residue protein sequence, read N- to C-terminus: Helix-loop-helix protein delilah (384 aa).

2 disordered regions span residues 1-101 (MKSN…TANA) and 187-227 (EEAE…KIVP). Residues 75-86 (KSRKNAPTKSKT) show a composition bias toward basic residues. The 60-residue stretch at 94 to 153 (YRRKTANARERTRMREINTAFETLRHCVPEAIKGEDAANTNEKLTKITTLRLAMKYITML) folds into the bHLH domain. A compositionally biased stretch (low complexity) spans 209–224 (KKSSAASKRQSQKQAK).

Efficient DNA binding requires dimerization with another bHLH protein, possibly with da. Expressed almost exclusively in the attachments sites of the somatic muscles to tendon cells in the epidermis.

Its subcellular location is the nucleus. Its function is as follows. Probably plays an important role in the differentiation of epidermal cells into the tendon cells that form the attachment sites for all muscles. In Drosophila melanogaster (Fruit fly), this protein is Helix-loop-helix protein delilah (tx).